Here is a 54-residue protein sequence, read N- to C-terminus: UPF0391 membrane protein Bpet1858 (54 aa).

Transmembrane regions (helical) follow at residues 5–25 and 27–47; these read AVVF…GIAA and AAGI…LSIL.

The protein belongs to the UPF0391 family.

It localises to the cell membrane. The chain is UPF0391 membrane protein Bpet1858 from Bordetella petrii (strain ATCC BAA-461 / DSM 12804 / CCUG 43448).